The sequence spans 161 residues: Shikimate kinase (161 aa).

Residue G10–T15 coordinates ATP. T14 is a binding site for Mg(2+). Substrate is bound by residues D28, R52, and G74. R114 serves as a coordination point for ATP. R132 contributes to the substrate binding site.

It belongs to the shikimate kinase family. As to quaternary structure, monomer. Mg(2+) is required as a cofactor.

It localises to the cytoplasm. It catalyses the reaction shikimate + ATP = 3-phosphoshikimate + ADP + H(+). It functions in the pathway metabolic intermediate biosynthesis; chorismate biosynthesis; chorismate from D-erythrose 4-phosphate and phosphoenolpyruvate: step 5/7. In terms of biological role, catalyzes the specific phosphorylation of the 3-hydroxyl group of shikimic acid using ATP as a cosubstrate. The polypeptide is Shikimate kinase (Streptococcus gordonii (strain Challis / ATCC 35105 / BCRC 15272 / CH1 / DL1 / V288)).